A 395-amino-acid polypeptide reads, in one-letter code: Elongation factor Tu (395 aa).

One can recognise a tr-type G domain in the interval 10–204 (KPHVNVGTIG…AVDNWVPLPE (195 aa)). A G1 region spans residues 19 to 26 (GHVDHGKT). GTP is bound at residue 19 to 26 (GHVDHGKT). Threonine 26 contacts Mg(2+). The G2 stretch occupies residues 60 to 64 (GITIN). Residues 81–84 (DCPG) form a G3 region. Residues 81 to 85 (DCPGH) and 136 to 139 (NKCD) each bind GTP. Residues 136 to 139 (NKCD) form a G4 region. Residues 174-176 (SAL) are G5.

It belongs to the TRAFAC class translation factor GTPase superfamily. Classic translation factor GTPase family. EF-Tu/EF-1A subfamily. In terms of assembly, monomer.

Its subcellular location is the cytoplasm. The catalysed reaction is GTP + H2O = GDP + phosphate + H(+). Its function is as follows. GTP hydrolase that promotes the GTP-dependent binding of aminoacyl-tRNA to the A-site of ribosomes during protein biosynthesis. This is Elongation factor Tu from Porphyromonas gingivalis (strain ATCC 33277 / DSM 20709 / CIP 103683 / JCM 12257 / NCTC 11834 / 2561).